A 141-amino-acid polypeptide reads, in one-letter code: MGFQKFSPFLALSILVLLQAGSLHAAPFRSALESSPADPATLSEDEARLLLAALVQDYVQMKASELEQEQEREGSSLDSPRSKRCGNLSTCMLGTYTQDFNKFHTFPQTAIGVGAPGKKRDMSSDLERDHRPHVSMPQNAN.

Residues 1–25 (MGFQKFSPFLALSILVLLQAGSLHA) form the signal peptide. Residues 26-82 (APFRSALESSPADPATLSEDEARLLLAALVQDYVQMKASELEQEQEREGSSLDSPRS) constitute a propeptide that is removed on maturation. Serine 43 carries the phosphoserine modification. 2 disordered regions span residues 64–85 (SELE…SKRC) and 111–141 (IGVG…QNAN). Cysteines 85 and 91 form a disulfide. Proline 116 is modified (proline amide). Residues 118–132 (KKRDMSSDLERDHRP) show a composition bias toward basic and acidic residues.

Belongs to the calcitonin family.

Its subcellular location is the secreted. Functionally, calcitonin is a peptide hormone that causes a rapid but short-lived drop in the level of calcium and phosphate in blood by promoting the incorporation of those ions in the bones. Calcitonin function is mediated by the calcitonin receptor/CALCR and the CALCR-RAMP2 (AMYR2) receptor complex. Its function is as follows. Katacalcin is a potent plasma calcium-lowering peptide. This is Calcitonin from Homo sapiens (Human).